A 266-amino-acid chain; its full sequence is Hemin import ATP-binding protein HmuV (266 aa).

Positions Ile-2–Ser-242 constitute an ABC transporter domain. Gly-34 to Ser-41 serves as a coordination point for ATP.

The protein belongs to the ABC transporter superfamily. Heme (hemin) importer (TC 3.A.1.14.5) family. As to quaternary structure, the complex is composed of two ATP-binding proteins (HmuV), two transmembrane proteins (HmuU) and a solute-binding protein (HmuT).

It localises to the cell inner membrane. In terms of biological role, part of the ABC transporter complex HmuTUV involved in hemin import. Responsible for energy coupling to the transport system. The protein is Hemin import ATP-binding protein HmuV of Bartonella henselae (strain ATCC 49882 / DSM 28221 / CCUG 30454 / Houston 1) (Rochalimaea henselae).